Here is a 277-residue protein sequence, read N- to C-terminus: MEIFVRNKPYTGPVKAVVLDWAGTTVDFGCMAPVTAFIEAFALRGVEISASEVRGPMGLMKMDHVRALCGLPSVSERWRELFGRIPNEDDVRLVYGDTVPLMVLSVADHAELIPGLLPAIGYFRGNGIKIGTSTGYTTPMMEVLLPRAEKRGYRPDSVVCSSDVPRGRPFPFMCYRNAIDLEVYPLEAVVKIGDTVSDIREGLNAGMWTIGVSKSGSDLGLTEAELDALPADDLRNRLALVESRFLEAGAHFVVEHIGRCPEIIEEINDLLSQGEVP.

D20 serves as the catalytic Nucleophile. Mg(2+) contacts are provided by D20 and A22. K61 serves as the catalytic Schiff-base intermediate with substrate. Position 194 (D194) interacts with Mg(2+).

It belongs to the HAD-like hydrolase superfamily. PhnX family. In terms of assembly, homodimer. The cofactor is Mg(2+).

It carries out the reaction phosphonoacetaldehyde + H2O = acetaldehyde + phosphate + H(+). In terms of biological role, involved in phosphonate degradation. The chain is Phosphonoacetaldehyde hydrolase from Syntrophobacter fumaroxidans (strain DSM 10017 / MPOB).